Consider the following 356-residue polypeptide: Calcium/calmodulin-dependent protein kinase type 1 (356 aa).

The short motif at 2-7 (PLFKRR) is the Nuclear localization signal element. Positions 22–278 (YDFRDVLGTG…CQSALEHPWI (257 aa)) constitute a Protein kinase domain. ATP is bound by residues 28 to 36 (LGTGAFSKV) and lysine 52. The Proton acceptor role is filled by aspartate 144. Threonine 179 is modified (phosphothreonine; by ckk-1). The interval 278–318 (ISGNTAYTHDIHRTVAVHLKKSLAKRNWKKAFNAAAAIRQL) is autoinhibitory domain. The tract at residues 298-319 (KSLAKRNWKKAFNAAAAIRQLQ) is calmodulin-binding.

This sequence belongs to the protein kinase superfamily. CAMK Ser/Thr protein kinase family. CaMK subfamily. It depends on Mg(2+) as a cofactor.

It localises to the nucleus. The protein localises to the cytoplasm. It carries out the reaction L-seryl-[protein] + ATP = O-phospho-L-seryl-[protein] + ADP + H(+). The catalysed reaction is L-threonyl-[protein] + ATP = O-phospho-L-threonyl-[protein] + ADP + H(+). Activated by Ca(2+)/calmodulin. Binding of calmodulin results in a conformational change that generates functional binding sites for both substrate and ATP, and thus relieves autoinhibition and lowers the Km of substrate binding. Must be phosphorylated by ckk-1 to be maximally active but this does not appear to be required for activity in AFD neurons. Functionally, calcium/calmodulin-dependent protein kinase that operates in the calcium-triggered CaMKK-CaMK1 signaling cascade which results in transcriptional activation. Transcriptional activation occurs at least in part through phosphorylation of crh-1. Regulates gene expression, sensory morphology, and function of the AFD thermosensory neurons. Involved in long-term adaptation of AFD neurons to temperatures warmer than the initial acclimatized cultivation temperature. Acts in the FLP thermal nociceptors to moderate the responsiveness to noxious heat and controls neuropeptide release from FLP neurons in response to temperature elevations. Regulates the dauer decision, the decision of the larvae to enter into the alternative stress-resistant and long-lived dauer developmental stage, based on the feeding state, primarily in the AWC sensory neurons. Acts non cell-autonomously in the AWC neurons to regulate expression of the daf-28 insulin-like peptide and cell-autonomously in the ASI sensory neurons to regulate expression of the growth promoting daf-7 in a food-regulated manner. Plays a role in memory-based thermal response of an individual AFD neuron cell. Involved in chemotaxis response in AWC neurons to attractant 2-heptanone, a volatile organic compound emitted by the nematode pathogenic bacterium B.nematocida B16. Represses transcription of glutamate receptor glr-1 in the nucleus basally and in response to change in synaptic activity. The sequence is that of Calcium/calmodulin-dependent protein kinase type 1 (cmk-1) from Caenorhabditis briggsae.